Here is a 739-residue protein sequence, read N- to C-terminus: Transcription activator of gluconeogenesis MCYG_04674 (739 aa).

A compositionally biased stretch (polar residues) spans 1–33 (MSPHQTTGQESDNMAVNGENAQASSQYIQLNSE). Positions 1 to 62 (MSPHQTTGQE…PSRPKRKKAK (62 aa)) are disordered. Residues 40–55 (AAEKKAAAAKAKDPSR) are compositionally biased toward basic and acidic residues. Positions 65–93 (CYACQRGHLTCGDERPCQRCIKRGFQDAC) form a DNA-binding region, zn(2)-C6 fungal-type. 5 disordered regions span residues 174–223 (GPEN…QFNS), 264–308 (DTPP…GDSG), 380–420 (SRQN…HKNA), 537–574 (NHNV…STTA), and 639–668 (AQNN…GQRR). 2 stretches are compositionally biased toward polar residues: residues 267-284 (PSDN…SSGT) and 397-411 (PVVS…NLNI). A compositionally biased stretch (low complexity) spans 547 to 557 (GLLTGSTSRGS). The segment covering 562–574 (PYSSDQFNSSTTA) has biased composition (polar residues). Residues 653–664 (NSSSNGTTSTGR) are compositionally biased toward low complexity.

Belongs to the ERT1/acuK family.

Its subcellular location is the nucleus. In terms of biological role, transcription factor which regulates nonfermentable carbon utilization. Activator of gluconeogenetic genes. The sequence is that of Transcription activator of gluconeogenesis MCYG_04674 from Arthroderma otae (strain ATCC MYA-4605 / CBS 113480) (Microsporum canis).